A 143-amino-acid polypeptide reads, in one-letter code: NADH-quinone oxidoreductase subunit A (143 aa).

The next 3 membrane-spanning stretches (helical) occupy residues 8–28 (FGNV…GYLT), 63–83 (FYVV…LFPW), and 93–113 (FALI…VYAW).

This sequence belongs to the complex I subunit 3 family. In terms of assembly, NDH-1 is composed of 14 different subunits. Subunits NuoA, H, J, K, L, M, N constitute the membrane sector of the complex.

Its subcellular location is the cell inner membrane. It catalyses the reaction a quinone + NADH + 5 H(+)(in) = a quinol + NAD(+) + 4 H(+)(out). Functionally, NDH-1 shuttles electrons from NADH, via FMN and iron-sulfur (Fe-S) centers, to quinones in the respiratory chain. The immediate electron acceptor for the enzyme in this species is believed to be a menaquinone. Couples the redox reaction to proton translocation (for every two electrons transferred, four hydrogen ions are translocated across the cytoplasmic membrane), and thus conserves the redox energy in a proton gradient. This chain is NADH-quinone oxidoreductase subunit A, found in Chlorobium luteolum (strain DSM 273 / BCRC 81028 / 2530) (Pelodictyon luteolum).